Here is a 228-residue protein sequence, read N- to C-terminus: Ion-translocating oxidoreductase complex subunit E (228 aa).

5 helical membrane passes run 24–44 (LLGL…LGLG), 73–93 (VFVL…NAFF), 95–115 (ELYL…AIIG), 130–150 (LADG…LGAL), and 184–204 (GFLL…LIAL).

The protein belongs to the NqrDE/RnfAE family. The complex is composed of six subunits: RnfA, RnfB, RnfC, RnfD, RnfE and RnfG.

It localises to the cell inner membrane. In terms of biological role, part of a membrane-bound complex that couples electron transfer with translocation of ions across the membrane. The polypeptide is Ion-translocating oxidoreductase complex subunit E (Thioalkalivibrio sulfidiphilus (strain HL-EbGR7)).